Here is a 526-residue protein sequence, read N- to C-terminus: MRTESIKTNRPMDLLLQYLQPISVALVVIALVWNYGRRNPTKKLAPEASGGRPIMGHLHLFNDGELTHRKLGAMADTYGPVFNIRFGSHKTLVVSDWEIVKECFTTNDKLFSNRPGTLGIKLMFYDADSVGYAPYGAYWRDLRKISTLKLLSNHRIDTIKHLRSSEVESCFESLYSQWGNGEKSGEFAPVRMDSWLGDLTFNVVARIVAGKKNFSANGDVGAQRYKAAMDEAMRLMRFFAFSDVIPSLSWLDNLRGLVREMKKCASEIDSIMATWVEEHRVKRNSGGNSQLEHDFIDVCLDIMEHSSLPGDDPDLVVKSTCLDMILGGSDTTTVTLTWAMSLLLNHPQVLQKAKEELETQVGKNRQVDDSDIPNLPFIQAIIKETMRLYPAGPLIERRTMEDCEVAGYQVPAGTRLLVNVWKMQRDGNVYKGDPLEFRPDRFLTSNADVDLKGQHYELIPFGAGRRICPGVSFAVQLMHLVLARLLHEFEITTVEPETKVDMAESGGLLCYKIMPLEVLIKPRLEI.

The chain crosses the membrane as a helical span at residues 14-34 (LLLQYLQPISVALVVIALVWN). Cysteine 468 serves as a coordination point for heme.

Belongs to the cytochrome P450 family. Heme serves as cofactor. Mainly expressed in roots, and barely in stems, leaves and carpels.

The protein localises to the membrane. The enzyme catalyses (S)-cis-N-methylcanadine + reduced [NADPH--hemoprotein reductase] + O2 = allocryptopine + oxidized [NADPH--hemoprotein reductase] + H2O + 2 H(+). It carries out the reaction (S)-cis-N-methylstylopine + reduced [NADPH--hemoprotein reductase] + O2 = protopine + oxidized [NADPH--hemoprotein reductase] + H2O + 2 H(+). The catalysed reaction is (S)-cis-N-methyltetrahydrothalifendine + reduced [NADPH--hemoprotein reductase] + O2 = 7-hydroxy-8-methoxy-11-methyl-17,19-dioxa-11-azatetracyclo[12.7.0.0(4,9).0(16,20)]henicosa-1(21),4(9),5,7,14,16(20)-hexaen-2-one + oxidized [NADPH--hemoprotein reductase] + H2O + 2 H(+). It catalyses the reaction (S)-cis-N-methyltetrahydropalmatine + reduced [NADPH--hemoprotein reductase] + O2 = muramine + oxidized [NADPH--hemoprotein reductase] + H2O + 2 H(+). Its pathway is alkaloid biosynthesis. With respect to regulation, repressed by cytochrome P450 inhibitors ketoconazole, metyrapone, prochloraz, ancymidol and cytochrome C. Functionally, involved in the biosynthesis of the isoquinoline alkaloid sanguinarine. Catalyzes the conversion of N-methylated protoberberine alkaloids N-methylstylopine and N-methylcanadine into protopine and allocryptopine, respectively. Can also use (S)-cis-N-methyltetrahydrothalifendine and (S)-cis-N-methyltetrahydropalmatine as substrates. The protein is Methyltetrahydroprotoberberine 14-monooxygenase of Papaver somniferum (Opium poppy).